The chain runs to 331 residues: Tetraacyldisaccharide 4'-kinase (331 aa).

55–62 (SVGGNGKT) contributes to the ATP binding site.

The protein belongs to the LpxK family.

It carries out the reaction a lipid A disaccharide + ATP = a lipid IVA + ADP + H(+). It participates in glycolipid biosynthesis; lipid IV(A) biosynthesis; lipid IV(A) from (3R)-3-hydroxytetradecanoyl-[acyl-carrier-protein] and UDP-N-acetyl-alpha-D-glucosamine: step 6/6. Functionally, transfers the gamma-phosphate of ATP to the 4'-position of a tetraacyldisaccharide 1-phosphate intermediate (termed DS-1-P) to form tetraacyldisaccharide 1,4'-bis-phosphate (lipid IVA). The protein is Tetraacyldisaccharide 4'-kinase of Aeromonas salmonicida (strain A449).